We begin with the raw amino-acid sequence, 162 residues long: MQLKSDMKRVEIFTDGACKGNPGPGGWGVCLHFNGETREFFGGEPVTTNNRMELLAAIRALQELESLEDNGQQHLQVQLHTDSQYVQKGISEWIHGWKKRGWRTADKKPVKNEALWRELDDLSQRHQVEWFWVRGHNGHAGNERADRLANQGVESVLSKKAD.

One can recognise an RNase H type-1 domain in the interval 6 to 154 (DMKRVEIFTD…ADRLANQGVE (149 aa)). 4 residues coordinate Mg(2+): aspartate 15, glutamate 53, aspartate 82, and aspartate 146.

Belongs to the RNase H family. Monomer. The cofactor is Mg(2+).

It localises to the cytoplasm. The enzyme catalyses Endonucleolytic cleavage to 5'-phosphomonoester.. Endonuclease that specifically degrades the RNA of RNA-DNA hybrids. The protein is Ribonuclease H of Nitrosomonas eutropha (strain DSM 101675 / C91 / Nm57).